Here is a 453-residue protein sequence, read N- to C-terminus: MMSDFGEELTKLAVAEDNPETSVLSKTGMHFPWLHKHVEAVVTGGKKRKDFAQTTSACLSFIQEALLKHQWQQAAEYMHSYLQTLEDSDTDKRQAAPEIIWKLGSEILFYHPKSNVETFNSFADRMKNIGVLNYLKISLQHALYLLHHGMLDDANRNLSKAETWRYGEKSSSQEVLINLVQAYKGLLQYYTWTRKKMELSKLDEDDYAYAAKTRTMLSQSCKTSTNICALVKTPGVWDPFVKSYVEMLEFYGDQDGAREMLTNYAYDEKFPSNPNAHVYLYEFLKREKAPRAKLISVLKILHEIVPSHTLMLEFHTLLRKSDTEEHQKLGLSVLFEVLDFAGCNKNITAWKYLAKYLKQILVGSHHEWVEEEWKSRRNWWPAFHFSFFWAKSDWKADTDLACEKAFVAGVLLGKGCKYFRYILKQDHETLKKKIKRMKKSVKKYTIVNPGVHT.

As to quaternary structure, component of the transcription factor SL1/TIF-IB complex, composed of TBP and at least TAF1A, TAF1B, TAF1C and TAF1D. In the complex interacts directly with TBP, TAF1A and TAF1B. Interaction of the SL1/TIF-IB subunits with TBP excludes interaction of TBP with the transcription factor IID (TFIID) subunits. Interacts with UBFT. Interacts with CEBPA (isoform 1 and isoform 4). Part of Pol I pre-initiation complex (PIC), in which Pol I core assembles with RRN3 and promoter-bound UTBF and SL1/TIF-IB complex.

It localises to the nucleus. The protein localises to the nucleolus. Its function is as follows. Component of the transcription factor SL1/TIF-IB complex, which is involved in the assembly of the PIC (pre-initiation complex) during RNA polymerase I-dependent transcription. The rate of PIC formation probably is primarily dependent on the rate of association of SL1/TIF-IB with the rDNA promoter. SL1/TIF-IB is involved in stabilization of nucleolar transcription factor 1/UBTF on rDNA. Formation of SL1/TIF-IB excludes the association of TBP with TFIID subunits. The sequence is that of TATA box-binding protein-associated factor RNA polymerase I subunit A (Taf1a) from Mus musculus (Mouse).